The primary structure comprises 122 residues: Large ribosomal subunit protein uL14 (122 aa).

The protein belongs to the universal ribosomal protein uL14 family. Part of the 50S ribosomal subunit. Forms a cluster with proteins L3 and L19. In the 70S ribosome, L14 and L19 interact and together make contacts with the 16S rRNA in bridges B5 and B8.

Functionally, binds to 23S rRNA. Forms part of two intersubunit bridges in the 70S ribosome. The sequence is that of Large ribosomal subunit protein uL14 from Anaeromyxobacter sp. (strain Fw109-5).